A 414-amino-acid chain; its full sequence is WW domain-containing oxidoreductase (414 aa).

A disordered region spans residues 1–24 (MAALRYAGLDDTDSEDELPPGWEE). Threonine 12 is subject to Phosphothreonine. Serine 14 bears the Phosphoserine mark. Residues 16–49 (DELPPGWEERTTKDGWVYYANHTEEKTQWEHPKT) enclose the WW 1 domain. Tyrosine 33 bears the Phosphotyrosine mark. The Nuclear localization signal signature appears at 50–55 (GKRKRV). The 34-residue stretch at 57-90 (GDLPYGWEQGTDENGQVFFVDHINKRTTYLDPRL) folds into the WW 2 domain. The segment at 125-414 (KVVVVTGANS…IQERLGSQSG (290 aa)) is interaction with MAPT. 131–137 (GANSGIG) is a binding site for NADP(+). Positions 209-273 (CNAATFALPW…RFTDINDSLG (65 aa)) are mediates targeting to the mitochondria. Residue serine 260 participates in substrate binding. Position 287 is a phosphotyrosine; by TNK2 (tyrosine 287). Tyrosine 293 functions as the Proton acceptor in the catalytic mechanism.

The protein belongs to the short-chain dehydrogenases/reductases (SDR) family. Interacts with TP53, p73/TP73 and MAPK8. Interacts with MAPT/TAU, RUNX2 and HYAL2. Forms a ternary complex with TP53 and MDM2. Interacts with ERBB4, LITAF and WBP1. Interacts with DVL1, DVL2 and DVL3. May interact with FAM189B and SCOTIN. Interacts with TNK2. Interacts with TMEM207. Interacts (via WW domain) with VOPP1. In terms of processing, phosphorylated upon genotoxic stress. Phosphorylation of Tyr-33 regulates interaction with TP53, TP73 and MAPK8. May also regulate proapoptotic activity. Phosphorylation by TNK2 is associated with polyubiquitination and degradation. Post-translationally, ubiquitinated when phosphorylated by TNK2, leading to its degradation.

It is found in the cytoplasm. The protein resides in the nucleus. Its subcellular location is the mitochondrion. It localises to the golgi apparatus. The protein localises to the lysosome. Putative oxidoreductase. Acts as a tumor suppressor and plays a role in apoptosis. May function synergistically with p53/TP53 to control genotoxic stress-induced cell death. Plays a role in TGFB1 signaling and TGFB1-mediated cell death. May also play a role in tumor necrosis factor (TNF)-mediated cell death. Required for normal bone development. Inhibits Wnt signaling, probably by sequestering DVL2 in the cytoplasm. This chain is WW domain-containing oxidoreductase (WWOX), found in Pongo abelii (Sumatran orangutan).